Reading from the N-terminus, the 350-residue chain is Phenylalanine--tRNA ligase alpha subunit (350 aa).

Glu259 is a binding site for Mg(2+).

It belongs to the class-II aminoacyl-tRNA synthetase family. Phe-tRNA synthetase alpha subunit type 1 subfamily. As to quaternary structure, tetramer of two alpha and two beta subunits. It depends on Mg(2+) as a cofactor.

It localises to the cytoplasm. The enzyme catalyses tRNA(Phe) + L-phenylalanine + ATP = L-phenylalanyl-tRNA(Phe) + AMP + diphosphate + H(+). The polypeptide is Phenylalanine--tRNA ligase alpha subunit (Rickettsia typhi (strain ATCC VR-144 / Wilmington)).